The sequence spans 236 residues: Auxin-responsive protein IAA16 (236 aa).

Positions 9 to 13 (LRLGL) match the EAR-like (transcriptional repression) motif. A disordered region spans residues 82-110 (KNVMSGQKPTTGDATEGNDKTSGSSGATS). The span at 85-94 (MSGQKPTTGD) shows a compositional bias: polar residues. Residues 118-218 (VAYVKVSMDG…SCKRIRIMKG (101 aa)) form the PB1 domain.

The protein belongs to the Aux/IAA family. Homodimers and heterodimers.

The protein localises to the nucleus. Functionally, aux/IAA proteins are short-lived transcriptional factors that function as repressors of early auxin response genes at low auxin concentrations. Repression is thought to result from the interaction with auxin response factors (ARFs), proteins that bind to the auxin-responsive promoter element (AuxRE). Formation of heterodimers with ARF proteins may alter their ability to modulate early auxin response genes expression. In Arabidopsis thaliana (Mouse-ear cress), this protein is Auxin-responsive protein IAA16 (IAA16).